Reading from the N-terminus, the 612-residue chain is Glucoamylase (612 aa).

An N-terminal signal peptide occupies residues 1 to 19; sequence MVSFSSCLRALALGSSVLA. The propeptide occupies 20-25; that stretch reads VQPVLR. N-linked (GlcNAc...) asparagine glycosylation is present at Asn39. Trp146 contacts substrate. Asp202 functions as the Proton acceptor in the catalytic mechanism. Glu205 (proton donor) is an active-site residue. Intrachain disulfides connect Cys236–Cys239, Cys248–Cys475, and Cys288–Cys296. A CBM20 domain is found at 506–612; the sequence is CQVPTTVSVT…KSAVQSDVWR (107 aa).

This sequence belongs to the glycosyl hydrolase 15 family.

The enzyme catalyses Hydrolysis of terminal (1-&gt;4)-linked alpha-D-glucose residues successively from non-reducing ends of the chains with release of beta-D-glucose.. The chain is Glucoamylase (glaA) from Aspergillus oryzae (strain ATCC 42149 / RIB 40) (Yellow koji mold).